The chain runs to 264 residues: Acyl-[acyl-carrier-protein]--UDP-N-acetylglucosamine O-acyltransferase (264 aa).

Belongs to the transferase hexapeptide repeat family. LpxA subfamily. In terms of assembly, homotrimer.

It localises to the cytoplasm. It carries out the reaction a (3R)-hydroxyacyl-[ACP] + UDP-N-acetyl-alpha-D-glucosamine = a UDP-3-O-[(3R)-3-hydroxyacyl]-N-acetyl-alpha-D-glucosamine + holo-[ACP]. It participates in glycolipid biosynthesis; lipid IV(A) biosynthesis; lipid IV(A) from (3R)-3-hydroxytetradecanoyl-[acyl-carrier-protein] and UDP-N-acetyl-alpha-D-glucosamine: step 1/6. In terms of biological role, involved in the biosynthesis of lipid A, a phosphorylated glycolipid that anchors the lipopolysaccharide to the outer membrane of the cell. The protein is Acyl-[acyl-carrier-protein]--UDP-N-acetylglucosamine O-acyltransferase of Chlorobaculum tepidum (strain ATCC 49652 / DSM 12025 / NBRC 103806 / TLS) (Chlorobium tepidum).